A 367-amino-acid polypeptide reads, in one-letter code: Probable 7-methylxanthine methyltransferase 2 (367 aa).

Tyr20 is an S-adenosyl-L-homocysteine binding site. Thr27 contributes to the theobromine binding site. Residues Cys64, Gln69, Asp101, Leu102, Ser134, and Phe135 each coordinate S-adenosyl-L-homocysteine. Theobromine contacts are provided by Tyr152, His155, and Trp156. Mg(2+)-binding residues include Asn172, Asp258, Phe260, and Asn261. Phe313 contributes to the theobromine binding site.

The protein belongs to the methyltransferase superfamily. Type-7 methyltransferase family. The cofactor is Mg(2+).

The enzyme catalyses 7-methylxanthine + S-adenosyl-L-methionine = theobromine + S-adenosyl-L-homocysteine + H(+). It functions in the pathway alkaloid biosynthesis. In terms of biological role, involved in the biosynthesis of theobromine. This chain is Probable 7-methylxanthine methyltransferase 2, found in Theobroma cacao (Cacao).